The sequence spans 226 residues: Ribonuclease 3 (226 aa).

The RNase III domain occupies 7–129; that stretch reads LARLSRTLGY…IIGAVYLDAN (123 aa). Glu-42 is a binding site for Mg(2+). Asp-46 is a catalytic residue. Mg(2+) is bound by residues Asp-115 and Glu-118. The active site involves Glu-118. The 71-residue stretch at 156–226 folds into the DRBM domain; it reads DPKTILQEYL…AAQILELINK (71 aa).

This sequence belongs to the ribonuclease III family. As to quaternary structure, homodimer. The cofactor is Mg(2+).

It localises to the cytoplasm. It carries out the reaction Endonucleolytic cleavage to 5'-phosphomonoester.. Digests double-stranded RNA. Involved in the processing of primary rRNA transcript to yield the immediate precursors to the large and small rRNAs (23S and 16S). Processes some mRNAs, and tRNAs when they are encoded in the rRNA operon. Processes pre-crRNA and tracrRNA of type II CRISPR loci if present in the organism. This Shewanella denitrificans (strain OS217 / ATCC BAA-1090 / DSM 15013) protein is Ribonuclease 3.